We begin with the raw amino-acid sequence, 160 residues long: Ribosomal RNA large subunit methyltransferase H (160 aa).

Residues Leu-77, Gly-109, and 128-133 (FSRMTF) contribute to the S-adenosyl-L-methionine site.

This sequence belongs to the RNA methyltransferase RlmH family. In terms of assembly, homodimer.

It localises to the cytoplasm. The enzyme catalyses pseudouridine(1915) in 23S rRNA + S-adenosyl-L-methionine = N(3)-methylpseudouridine(1915) in 23S rRNA + S-adenosyl-L-homocysteine + H(+). In terms of biological role, specifically methylates the pseudouridine at position 1915 (m3Psi1915) in 23S rRNA. This is Ribosomal RNA large subunit methyltransferase H from Pelotomaculum thermopropionicum (strain DSM 13744 / JCM 10971 / SI).